A 202-amino-acid polypeptide reads, in one-letter code: MSALETQALGMIPMVIEQSGRGERSYDIYSRLLKERIVFLIGEVNDQTANLVVAQLLFLESENPDKDISFYINSPGGSVTAGMAIYDTMQFIKPDVSTMCLGFAASMGAFLLAAGAKGKRFSLPNSKIMIHQVLGGARGQATDIEIHARDILRTKDQMNRILAERTGQPLEKVKADTERDYFLTADEAKEYGLVDQVVTQRP.

The active-site Nucleophile is the Ser-106. His-131 is an active-site residue.

It belongs to the peptidase S14 family. In terms of assembly, fourteen ClpP subunits assemble into 2 heptameric rings which stack back to back to give a disk-like structure with a central cavity, resembling the structure of eukaryotic proteasomes.

The protein resides in the cytoplasm. The enzyme catalyses Hydrolysis of proteins to small peptides in the presence of ATP and magnesium. alpha-casein is the usual test substrate. In the absence of ATP, only oligopeptides shorter than five residues are hydrolyzed (such as succinyl-Leu-Tyr-|-NHMec, and Leu-Tyr-Leu-|-Tyr-Trp, in which cleavage of the -Tyr-|-Leu- and -Tyr-|-Trp bonds also occurs).. Cleaves peptides in various proteins in a process that requires ATP hydrolysis. Has a chymotrypsin-like activity. Plays a major role in the degradation of misfolded proteins. The polypeptide is ATP-dependent Clp protease proteolytic subunit (Paracidovorax citrulli (strain AAC00-1) (Acidovorax citrulli)).